A 463-amino-acid chain; its full sequence is Serine carboxypeptidase-like 32 (463 aa).

Positions 1-22 are cleaved as a signal peptide; the sequence is MMNISNVSIALYLCTLFAFVSS. 3 disulfides stabilise this stretch: Cys-86–Cys-345, Cys-249–Cys-262, and Cys-286–Cys-313. N-linked (GlcNAc...) asparagine glycosylation occurs at Asn-137. Ser-179 is an active-site residue. 2 N-linked (GlcNAc...) asparagine glycosylation sites follow: Asn-201 and Asn-250. N-linked (GlcNAc...) asparagine glycosylation is found at Asn-341 and Asn-354. Catalysis depends on residues Asp-384 and His-436.

The protein belongs to the peptidase S10 family. Expressed in flowers.

Its subcellular location is the secreted. Functionally, probable carboxypeptidase. The protein is Serine carboxypeptidase-like 32 (SCPL32) of Arabidopsis thaliana (Mouse-ear cress).